A 31-amino-acid chain; its full sequence is U8-ctenitoxin-Co1a (31 aa).

2 disulfide bridges follow: Cys4–Cys18 and Cys11–Cys24.

Expressed by the venom gland.

The protein resides in the secreted. Functionally, blocks voltage-gated sodium channels (Nav). This is U8-ctenitoxin-Co1a from Ctenus ornatus (Brazilian spider).